The chain runs to 256 residues: tRNA-cytidine(32) 2-sulfurtransferase 1 (256 aa).

The short motif at S38–S43 is the PP-loop motif element. Residues C113, C116, and C204 each contribute to the [4Fe-4S] cluster site.

It belongs to the TtcA family. As to quaternary structure, homodimer. The cofactor is Mg(2+). Requires [4Fe-4S] cluster as cofactor.

It localises to the cytoplasm. The catalysed reaction is cytidine(32) in tRNA + S-sulfanyl-L-cysteinyl-[cysteine desulfurase] + AH2 + ATP = 2-thiocytidine(32) in tRNA + L-cysteinyl-[cysteine desulfurase] + A + AMP + diphosphate + H(+). It participates in tRNA modification. In terms of biological role, catalyzes the ATP-dependent 2-thiolation of cytidine in position 32 of tRNA, to form 2-thiocytidine (s(2)C32). The sulfur atoms are provided by the cysteine/cysteine desulfurase (IscS) system. The protein is tRNA-cytidine(32) 2-sulfurtransferase 1 of Francisella philomiragia subsp. philomiragia (strain ATCC 25017 / CCUG 19701 / FSC 153 / O#319-036).